The primary structure comprises 148 residues: MKYQKLENQEAHWKWLYLIKKHREGENITRYEERSLSEDKVKQLLSQQNQPQAIENWIKAHLSPHLMIKLDQAIRARRKRFFNGEKQSTKKKSIDLEYAVWLRLSRYSRKMKMTLSETITYMIDERESKAQYEHQISAMKAGLKDLLK.

This sequence belongs to the MatP family. Homodimer.

The protein resides in the cytoplasm. In terms of biological role, required for spatial organization of the terminus region of the chromosome (Ter macrodomain) during the cell cycle. Prevents early segregation of duplicated Ter macrodomains during cell division. Binds specifically to matS, which is a 13 bp signature motif repeated within the Ter macrodomain. The chain is Macrodomain Ter protein from Pasteurella multocida (strain Pm70).